Here is a 300-residue protein sequence, read N- to C-terminus: Acetylglutamate kinase (300 aa).

Residues 68 to 69, Arg-90, and Asn-194 each bind substrate; that span reads GG.

This sequence belongs to the acetylglutamate kinase family. ArgB subfamily.

Its subcellular location is the cytoplasm. It catalyses the reaction N-acetyl-L-glutamate + ATP = N-acetyl-L-glutamyl 5-phosphate + ADP. The protein operates within amino-acid biosynthesis; L-arginine biosynthesis; N(2)-acetyl-L-ornithine from L-glutamate: step 2/4. Functionally, catalyzes the ATP-dependent phosphorylation of N-acetyl-L-glutamate. This is Acetylglutamate kinase from Methanocella arvoryzae (strain DSM 22066 / NBRC 105507 / MRE50).